A 174-amino-acid polypeptide reads, in one-letter code: MQDRRSSYDYEGLLACGRGELFGPGNAQLPLPPMLMFDRITDINEDGGEFGKGLIRAELDVKPDLWFFGCHFKGDPVMPGCLGLDALWQMVGFFLGWTGGEGRGRALGLGELKFTGQVLPPVRKVVYNVDIKRVMRSKLVLGIADGWLSADDDIIYRAKDLKVGLFKQDAGPGA.

The active site involves H71.

Belongs to the thioester dehydratase family. FabA subfamily. In terms of assembly, homodimer.

Its subcellular location is the cytoplasm. It carries out the reaction a (3R)-hydroxyacyl-[ACP] = a (2E)-enoyl-[ACP] + H2O. It catalyses the reaction (3R)-hydroxydecanoyl-[ACP] = (2E)-decenoyl-[ACP] + H2O. The enzyme catalyses (2E)-decenoyl-[ACP] = (3Z)-decenoyl-[ACP]. It participates in lipid metabolism; fatty acid biosynthesis. Necessary for the introduction of cis unsaturation into fatty acids. Catalyzes the dehydration of (3R)-3-hydroxydecanoyl-ACP to E-(2)-decenoyl-ACP and then its isomerization to Z-(3)-decenoyl-ACP. Can catalyze the dehydratase reaction for beta-hydroxyacyl-ACPs with saturated chain lengths up to 16:0, being most active on intermediate chain length. The protein is 3-hydroxydecanoyl-[acyl-carrier-protein] dehydratase of Nitrobacter winogradskyi (strain ATCC 25391 / DSM 10237 / CIP 104748 / NCIMB 11846 / Nb-255).